A 465-amino-acid polypeptide reads, in one-letter code: Calcitonin gene-related peptide type 1 receptor (465 aa).

The signal sequence occupies residues 1-17 (MVICLLLCTPTDIFVVA). Over 18–141 (SPEVNETQEY…HTNEGRMTAM (124 aa)) the chain is Extracellular. N-linked (GlcNAc...) asparagine glycosylation is found at Asn-22, Asn-68, Asn-120, and Asn-125. Disulfide bonds link Cys-50–Cys-76, Cys-67–Cys-107, and Cys-90–Cys-129. A helical transmembrane segment spans residues 142 to 166 (NLFYLALIGHGLSLTSLLISLGIFF). The Cytoplasmic segment spans residues 167–177 (YFKSLSCQRIT). The chain crosses the membrane as a helical span at residues 178 to 200 (LHKNLFFSFVLNSVITIIWLTAV). Residues 201 to 211 (ANNQELVQRNP) are Extracellular-facing. Residues 212–240 (TSCKVSQFIHLYLFGCNYFWMLCEGIYLH) form a helical membrane-spanning segment. The Cytoplasmic segment spans residues 241-254 (TLIVVAVFAEKQHL). The helical transmembrane segment at 255–275 (MWYYLLGWGFPLIPASIHAIA) threads the bilayer. Topologically, residues 276–291 (RSYYYNDNCWISSNTS) are extracellular. An N-linked (GlcNAc...) asparagine glycan is attached at Asn-289. A helical transmembrane segment spans residues 292 to 316 (LLYIIHGPICAALLVNLFFLLNIVR). The Cytoplasmic portion of the chain corresponds to 317 to 331 (VLITKLKVTHQAESS). A helical membrane pass occupies residues 332–353 (LYMKAVRATLILVPLLGIQYVL). The Extracellular segment spans residues 354–368 (LPYKPEGRVSSEIYD). Residues 369–389 (YIMHILMHYQGLLVATIFCFF) form a helical membrane-spanning segment. Residues 390–465 (NGEVQGVLRR…SILKSENPFT (76 aa)) are Cytoplasmic-facing.

It belongs to the G-protein coupled receptor 2 family.

It localises to the cell membrane. May function as G protein-coupled receptor for calcitonin-gene-related peptides and adrenomedullin. Specificity may be modulated by accessory proteins. May activate cAMP-dependent pathway. The sequence is that of Calcitonin gene-related peptide type 1 receptor (calcrl) from Oncorhynchus gorbuscha (Pink salmon).